The chain runs to 115 residues: NADH-ubiquinone oxidoreductase chain 3 (115 aa).

Helical transmembrane passes span 4 to 24 (IVIL…AFWL), 55 to 75 (FFLI…LLPL), and 84 to 104 (TYFT…GLMY).

It belongs to the complex I subunit 3 family. In terms of assembly, core subunit of respiratory chain NADH dehydrogenase (Complex I) which is composed of 45 different subunits. Interacts with TMEM186. Interacts with TMEM242.

The protein resides in the mitochondrion inner membrane. The catalysed reaction is a ubiquinone + NADH + 5 H(+)(in) = a ubiquinol + NAD(+) + 4 H(+)(out). Core subunit of the mitochondrial membrane respiratory chain NADH dehydrogenase (Complex I) which catalyzes electron transfer from NADH through the respiratory chain, using ubiquinone as an electron acceptor. Essential for the catalytic activity of complex I. In Eligmodontia typus (Highland gerbil mouse), this protein is NADH-ubiquinone oxidoreductase chain 3.